Consider the following 246-residue polypeptide: U2 small nuclear ribonucleoprotein A' (246 aa).

LRR repeat units follow at residues 19–40, 42–63, 64–85, and 88–109; these read RDRELDLRGLKIPAIENLGVTR, QNDAIDLTDNDIRYLGNFPLLQ, QLKTLQLANNLISRIDPRIGHS, and ALHSLNLTNNCISDLSELVHLS. Positions 122 to 160 constitute an LRRCT domain; the sequence is TPASREAQYREFVIWKLPQVRVLDYQRIKDKERARAKDL.

This sequence belongs to the U2 small nuclear ribonucleoprotein A family. In terms of assembly, associated with the spliceosome.

The protein localises to the nucleus. Involved in pre-mRNA splicing. The polypeptide is U2 small nuclear ribonucleoprotein A' (LEA1) (Mycosarcoma maydis (Corn smut fungus)).